A 155-amino-acid polypeptide reads, in one-letter code: SsrA-binding protein (155 aa).

Belongs to the SmpB family.

Its subcellular location is the cytoplasm. Required for rescue of stalled ribosomes mediated by trans-translation. Binds to transfer-messenger RNA (tmRNA), required for stable association of tmRNA with ribosomes. tmRNA and SmpB together mimic tRNA shape, replacing the anticodon stem-loop with SmpB. tmRNA is encoded by the ssrA gene; the 2 termini fold to resemble tRNA(Ala) and it encodes a 'tag peptide', a short internal open reading frame. During trans-translation Ala-aminoacylated tmRNA acts like a tRNA, entering the A-site of stalled ribosomes, displacing the stalled mRNA. The ribosome then switches to translate the ORF on the tmRNA; the nascent peptide is terminated with the 'tag peptide' encoded by the tmRNA and targeted for degradation. The ribosome is freed to recommence translation, which seems to be the essential function of trans-translation. The polypeptide is SsrA-binding protein (Bordetella parapertussis (strain 12822 / ATCC BAA-587 / NCTC 13253)).